Reading from the N-terminus, the 242-residue chain is uncharacterized protein (242 aa).

The N-terminal stretch at 1–20 (MTFIKGLPLMLLTISLGCNA) is a signal peptide.

The protein belongs to the periplasmic pilus chaperone family.

The protein localises to the periplasm. Its function is as follows. Could be required for the biogenesis of the putative YbgD fimbria. This is an uncharacterized protein from Escherichia coli (strain K12).